Here is a 311-residue protein sequence, read N- to C-terminus: Metal-staphylopine import system permease protein CntB (311 aa).

A run of 6 helical transmembrane segments spans residues 9 to 29, 105 to 125, 139 to 159, 173 to 193, 237 to 257, and 274 to 294; these read IALM…LTYI, LTII…VVSA, VAFF…IIYV, GPES…GIYF, IFCM…YIFA, and FPVI…FNTL. In terms of domain architecture, ABC transmembrane type-1 spans 99 to 295; the sequence is FMNTLKLTII…VLFIVFNTLA (197 aa).

The protein belongs to the binding-protein-dependent transport system permease family. In terms of assembly, the complex is composed of two ATP-binding proteins (CntD and CntF), two transmembrane proteins (CntB and CntC) and a solute-binding protein (CntA).

Its subcellular location is the cell membrane. Functionally, part of the ABC transporter complex CntABCDF (Opp1) involved in the uptake of metal in complex with the metallophore staphylopine (StP). May be involved in the import of a large array of divalent metals ions such as nickel, cobalt, zinc, copper and iron. Probably responsible for the translocation of the substrate across the membrane. The protein is Metal-staphylopine import system permease protein CntB of Staphylococcus aureus (strain Mu50 / ATCC 700699).